The following is a 230-amino-acid chain: uncharacterized protein (230 aa).

This is an uncharacterized protein from Mycobacterium tuberculosis (strain ATCC 25618 / H37Rv).